The sequence spans 500 residues: MKFLAVLLAAGMLAFLGAVICIIASVPLAASPARALPGGADNASVASGAAASPGPQRSLSALHGAGGSAGPPALPGAPAASAHPLPPGPLFSRFLCTPLAAACPSGAQQGDAAGAAPGEREELLLLQSTAEQLRQTALQQEARIRADQDTIRELTGKLGRCESGLPRGLQGAGPRRDTMADGPWDSPALILELEDAVRALRDRIDRLEQELPARVNLSAAPAPVSAVPTGLHSKMDQLEGQLLAQVLALEKERVALSHSSRRQRQEVEKELDVLQGRVAELEHGSSAYSPPDAFKISIPIRNNYMYARVRKALPELYAFTACMWLRSRSSGTGQGTPFSYSVPGQANEIVLLEAGHEPMELLINDKVAQLPLSLKDNGWHHICIAWTTRDGLWSAYQDGELQGSGENLAAWHPIKPHGILILGQEQDTLGGRFDATQAFVGDIAQFNLWDHALTPAQVLGIANCTAPLLGNVLPWEDKLVEAFGGATKAAFDVCKGRAKA.

Over 1 to 2 (MK) the chain is Cytoplasmic. The chain crosses the membrane as a helical; Signal-anchor for type II membrane protein span at residues 3 to 23 (FLAVLLAAGMLAFLGAVICII). Topologically, residues 24-500 (ASVPLAASPA…FDVCKGRAKA (477 aa)) are extracellular. Residue Asn42 is glycosylated (N-linked (GlcNAc...) asparagine). Positions 42–63 (NASVASGAAASPGPQRSLSALH) are enriched in low complexity. Disordered regions lie at residues 42 to 81 (NASV…PAAS) and 162 to 183 (ESGL…ADGP). N-linked (GlcNAc...) asparagine glycosylation occurs at Asn216. Residues 292 to 494 (DAFKISIPIR…GATKAAFDVC (203 aa)) form the Pentraxin (PTX) domain. A disulfide bridge links Cys322 with Cys383. Residues Asn347, Glu425, Gln426, Asp427, and Gln437 each coordinate Ca(2+). Residue Asn463 is glycosylated (N-linked (GlcNAc...) asparagine).

In terms of assembly, heteropentamer with NPTX1 and/or NPTX2. Also binds taipoxin-associated calcium-binding protein 49 (TCBP49/RCN2). Interacts with KLHL2. Requires Ca(2+) as cofactor. Ubiquitinated by a cullin-RING-based BCR (BTB-CUL3-RBX1) E3 ubiquitin-protein ligase complex containing KLHL2.

It is found in the membrane. Functionally, may be involved in mediating uptake of synaptic material during synapse remodeling or in mediating the synaptic clustering of AMPA glutamate receptors at a subset of excitatory synapses. This is Neuronal pentraxin receptor (NPTXR) from Homo sapiens (Human).